The sequence spans 188 residues: Ribose 1,5-bisphosphate phosphokinase PhnN (188 aa).

Belongs to the ribose 1,5-bisphosphokinase family.

It catalyses the reaction alpha-D-ribose 1,5-bisphosphate + ATP = 5-phospho-alpha-D-ribose 1-diphosphate + ADP. Its pathway is metabolic intermediate biosynthesis; 5-phospho-alpha-D-ribose 1-diphosphate biosynthesis; 5-phospho-alpha-D-ribose 1-diphosphate from D-ribose 5-phosphate (route II): step 3/3. Its function is as follows. Catalyzes the phosphorylation of ribose 1,5-bisphosphate to 5-phospho-D-ribosyl alpha-1-diphosphate (PRPP). This Dickeya zeae (strain Ech586) (Dickeya dadantii (strain Ech586)) protein is Ribose 1,5-bisphosphate phosphokinase PhnN.